Consider the following 530-residue polypeptide: Ubiquitin carboxyl-terminal hydrolase 17-like protein 22 (530 aa).

Residues 80–375 (AGLQNMGNTC…QAYVLFYIQK (296 aa)) enclose the USP domain. The active-site Nucleophile is the cysteine 89. Residue histidine 334 is the Proton acceptor of the active site. Basic and acidic residues-rich tracts occupy residues 382-392 (SESVSRGREPR) and 398-412 (DTDRRATQGELKRDH). 2 disordered regions span residues 382-412 (SESVSRGREPRALGAEDTDRRATQGELKRDH) and 476-530 (KNHH…LVCQ). Residues 484-495 (SSLLKLSSTTPT) show a composition bias toward low complexity. The span at 496-505 (HQESMNTGTL) shows a compositional bias: polar residues. Basic residues predominate over residues 510–524 (GRARRSKGKNKHSKR).

It belongs to the peptidase C19 family. USP17 subfamily.

It localises to the nucleus. Its subcellular location is the endoplasmic reticulum. The enzyme catalyses Thiol-dependent hydrolysis of ester, thioester, amide, peptide and isopeptide bonds formed by the C-terminal Gly of ubiquitin (a 76-residue protein attached to proteins as an intracellular targeting signal).. Deubiquitinating enzyme that removes conjugated ubiquitin from specific proteins to regulate different cellular processes that may include cell proliferation, progression through the cell cycle, apoptosis, cell migration, and the cellular response to viral infection. The sequence is that of Ubiquitin carboxyl-terminal hydrolase 17-like protein 22 (USP17L22) from Homo sapiens (Human).